The chain runs to 354 residues: MTELKNDRYLRALLRQPVDVTPVWMMRQAGRYLPEYKATRAQAGDFMSLCKNAELACEVTLQPLRRYPLDAAILFSDILTVPDAMGLGLYFEAGEGPRFTSPVTCKADVDKLPIPDPEDELGYVMNAVRTIRRELKGEVPLIGFSGSPWTLATYMVEGGSSKAFTVIKKMMYADPQALHALLDKLAKSVTLYLNAQIKAGAQAVMIFDTWGGVLTGRDYQQFSLYYMHKIVDGLLRENDGRRVPVTLFTKGGGQWLEAMAETGCDALGLDWTTDIADARRRVGNKVALQGNMDPSMLYAPPARIEEEVATILAGFGHGEGHVFNLGHGIHQDVPPEHAGVFVEAVHRLSEQYHR.

Substrate contacts are provided by residues 27–31 (RQAGR), D77, Y154, T209, and H327.

It belongs to the uroporphyrinogen decarboxylase family. Homodimer.

The protein localises to the cytoplasm. It carries out the reaction uroporphyrinogen III + 4 H(+) = coproporphyrinogen III + 4 CO2. Its pathway is porphyrin-containing compound metabolism; protoporphyrin-IX biosynthesis; coproporphyrinogen-III from 5-aminolevulinate: step 4/4. In terms of biological role, catalyzes the decarboxylation of four acetate groups of uroporphyrinogen-III to yield coproporphyrinogen-III. The protein is Uroporphyrinogen decarboxylase of Escherichia coli O17:K52:H18 (strain UMN026 / ExPEC).